We begin with the raw amino-acid sequence, 384 residues long: Deoxyguanosinetriphosphate triphosphohydrolase-like protein (384 aa).

Positions 62–198 (RLTHSLEVST…AALADDISYI (137 aa)) constitute an HD domain.

This sequence belongs to the dGTPase family. Type 2 subfamily.

The polypeptide is Deoxyguanosinetriphosphate triphosphohydrolase-like protein (Rickettsia conorii (strain ATCC VR-613 / Malish 7)).